Consider the following 319-residue polypeptide: Acetyl-coenzyme A carboxylase carboxyl transferase subunit alpha (319 aa).

Positions 35–296 (NIDEEVHRLR…KAQLLEDLAD (262 aa)) constitute a CoA carboxyltransferase C-terminal domain.

It belongs to the AccA family. Acetyl-CoA carboxylase is a heterohexamer composed of biotin carboxyl carrier protein (AccB), biotin carboxylase (AccC) and two subunits each of ACCase subunit alpha (AccA) and ACCase subunit beta (AccD).

Its subcellular location is the cytoplasm. It catalyses the reaction N(6)-carboxybiotinyl-L-lysyl-[protein] + acetyl-CoA = N(6)-biotinyl-L-lysyl-[protein] + malonyl-CoA. It functions in the pathway lipid metabolism; malonyl-CoA biosynthesis; malonyl-CoA from acetyl-CoA: step 1/1. In terms of biological role, component of the acetyl coenzyme A carboxylase (ACC) complex. First, biotin carboxylase catalyzes the carboxylation of biotin on its carrier protein (BCCP) and then the CO(2) group is transferred by the carboxyltransferase to acetyl-CoA to form malonyl-CoA. This Salmonella arizonae (strain ATCC BAA-731 / CDC346-86 / RSK2980) protein is Acetyl-coenzyme A carboxylase carboxyl transferase subunit alpha.